The primary structure comprises 391 residues: Chalcone synthase 2 (391 aa).

The active site involves cysteine 164.

This sequence belongs to the thiolase-like superfamily. Chalcone/stilbene synthases family.

The catalysed reaction is (E)-4-coumaroyl-CoA + 3 malonyl-CoA + 3 H(+) = 2',4,4',6'-tetrahydroxychalcone + 3 CO2 + 4 CoA. The protein operates within secondary metabolite biosynthesis; flavonoid biosynthesis. In terms of biological role, the primary product of this enzyme is 4,2',4',6'-tetrahydroxychalcone (also termed naringenin-chalcone or chalcone) which can under specific conditions spontaneously isomerize into naringenin. This Citrus sinensis (Sweet orange) protein is Chalcone synthase 2 (CHS2).